Here is a 196-residue protein sequence, read N- to C-terminus: Putative 3-methyladenine DNA glycosylase (196 aa).

Belongs to the DNA glycosylase MPG family.

This is Putative 3-methyladenine DNA glycosylase from Chlorobium phaeobacteroides (strain DSM 266 / SMG 266 / 2430).